Here is a 98-residue protein sequence, read N- to C-terminus: Transcription elongation factor A protein-like 7 (98 aa).

The segment covering 1-22 (MQKSCNEKEGKPKGSEAKREDE) has biased composition (basic and acidic residues). The interval 1–33 (MQKSCNEKEGKPKGSEAKREDEQPCGALEGQRL) is disordered. Positions 59-89 (GEEMTGEEEEMERCLEEIRSLRKKFRALHSN) form a coiled coil.

This sequence belongs to the TFS-II family. TFA subfamily.

It localises to the nucleus. In terms of biological role, plays a role in the negative regulation of NF-kappa-B signaling at the basal level by modulating transcriptional activity of NF-kappa-B on its target gene promoters. Associates with cyclin D1 promoter containing Myc E-box sequence and transcriptionally represses cyclin D1 expression. Regulates telomerase reverse transcriptase expression and telomerase activity in both ALT (alternative lengthening of telomeres)and telomerase-positive cell lines. The protein is Transcription elongation factor A protein-like 7 (Tceal7) of Mus musculus (Mouse).